A 57-amino-acid polypeptide reads, in one-letter code: UPF0391 membrane protein Arad_3976 (57 aa).

Helical transmembrane passes span tryptophan 4–serine 24 and valine 33–glycine 53.

The protein belongs to the UPF0391 family.

It localises to the cell membrane. The polypeptide is UPF0391 membrane protein Arad_3976 (Rhizobium rhizogenes (strain K84 / ATCC BAA-868) (Agrobacterium radiobacter)).